Consider the following 135-residue polypeptide: Large ribosomal subunit protein uL16c (135 aa).

This sequence belongs to the universal ribosomal protein uL16 family. In terms of assembly, part of the 50S ribosomal subunit.

The protein resides in the plastid. The protein localises to the chloroplast. This is Large ribosomal subunit protein uL16c from Euglena gracilis.